The following is a 296-amino-acid chain: Malonyl-[acyl-carrier protein] O-methyltransferase (296 aa).

It belongs to the methyltransferase superfamily.

It catalyses the reaction malonyl-[ACP] + S-adenosyl-L-methionine = malonyl-[ACP] methyl ester + S-adenosyl-L-homocysteine. The protein operates within cofactor biosynthesis; biotin biosynthesis. Functionally, converts the free carboxyl group of a malonyl-thioester to its methyl ester by transfer of a methyl group from S-adenosyl-L-methionine (SAM). It allows to synthesize pimeloyl-ACP via the fatty acid synthetic pathway. The sequence is that of Malonyl-[acyl-carrier protein] O-methyltransferase from Methylovorus sp. (strain MP688).